A 435-amino-acid polypeptide reads, in one-letter code: Cytidine monophosphate-N-acetylneuraminic acid hydroxylase (435 aa).

Belongs to the CMP-Neu5Ac hydroxylase family. The cofactor is [2Fe-2S] cluster.

The protein resides in the cytoplasm. It carries out the reaction CMP-N-acetyl-beta-neuraminate + 2 Fe(II)-[cytochrome b5] + O2 + 2 H(+) = CMP-N-glycoloyl-beta-neuraminate + 2 Fe(III)-[cytochrome b5] + H2O. The protein operates within amino-sugar metabolism; N-acetylneuraminate metabolism. Sialic acids are components of carbohydrate chains of glycoconjugates and are involved in cell-cell recognition and cell-pathogen interactions. Catalyzes the conversion of CMP-N-acetylneuraminic acid (CMP-Neu5Ac) into its hydroxylated derivative CMP-N-glycolylneuraminic acid (CMP-Neu5Gc), a sialic acid abundantly expressed at the surface of many cells. The polypeptide is Cytidine monophosphate-N-acetylneuraminic acid hydroxylase (Sus scrofa (Pig)).